The chain runs to 196 residues: DnaA initiator-associating protein DiaA (196 aa).

In terms of domain architecture, SIS spans 34–196; that stretch reads LVHSLLNGNK…DNTLFLHQDD (163 aa).

Belongs to the SIS family. DiaA subfamily. As to quaternary structure, homotetramer; dimer of dimers.

Functionally, required for the timely initiation of chromosomal replication via direct interactions with the DnaA initiator protein. This is DnaA initiator-associating protein DiaA from Salmonella paratyphi A (strain ATCC 9150 / SARB42).